We begin with the raw amino-acid sequence, 261 residues long: Glucosamine-6-phosphate deaminase (261 aa).

The active-site Proton acceptor; for enolization step is Asp-67. Asp-136 serves as the catalytic For ring-opening step. The active-site Proton acceptor; for ring-opening step is His-138. Catalysis depends on Glu-143, which acts as the For ring-opening step.

Belongs to the glucosamine/galactosamine-6-phosphate isomerase family. NagB subfamily.

The enzyme catalyses alpha-D-glucosamine 6-phosphate + H2O = beta-D-fructose 6-phosphate + NH4(+). Its pathway is amino-sugar metabolism; N-acetylneuraminate degradation; D-fructose 6-phosphate from N-acetylneuraminate: step 5/5. In terms of biological role, catalyzes the reversible isomerization-deamination of glucosamine 6-phosphate (GlcN6P) to form fructose 6-phosphate (Fru6P) and ammonium ion. In Mycolicibacterium smegmatis (strain ATCC 700084 / mc(2)155) (Mycobacterium smegmatis), this protein is Glucosamine-6-phosphate deaminase.